A 422-amino-acid chain; its full sequence is Inhibitory synaptic factor 2A (422 aa).

The interval 143-163 (FLADSKEKSEAGPMEEPRPCS) is disordered. Residues 146 to 160 (DSKEKSEAGPMEEPR) are compositionally biased toward basic and acidic residues. At Ser177 the chain carries Phosphoserine. Positions 344-370 (TEVVDLKAQLQVMENLISSSQETIKVL) form a coiled coil.

This sequence belongs to the INSYN2 family. Interacts with GPHN.

It is found in the postsynaptic density. In terms of biological role, component of the protein machinery at the inhibitory synapses, probably acting as a scaffold. Inhibitory synapses dampen neuronal activity through postsynaptic hyperpolarization. This synaptic inhibition is fundamental for the functioning of the central nervous system, shaping and orchestrating the flow of information through neuronal networks to generate a precise neural code. This chain is Inhibitory synaptic factor 2A, found in Mus musculus (Mouse).